The sequence spans 60 residues: UPF0434 protein YcaR (60 aa).

The protein belongs to the UPF0434 family.

The sequence is that of UPF0434 protein YcaR from Escherichia coli O81 (strain ED1a).